Reading from the N-terminus, the 93-residue chain is Pyrimidine/purine nucleoside phosphorylase (93 aa).

It belongs to the nucleoside phosphorylase PpnP family.

It catalyses the reaction a purine D-ribonucleoside + phosphate = a purine nucleobase + alpha-D-ribose 1-phosphate. The enzyme catalyses adenosine + phosphate = alpha-D-ribose 1-phosphate + adenine. It carries out the reaction cytidine + phosphate = cytosine + alpha-D-ribose 1-phosphate. The catalysed reaction is guanosine + phosphate = alpha-D-ribose 1-phosphate + guanine. It catalyses the reaction inosine + phosphate = alpha-D-ribose 1-phosphate + hypoxanthine. The enzyme catalyses thymidine + phosphate = 2-deoxy-alpha-D-ribose 1-phosphate + thymine. It carries out the reaction uridine + phosphate = alpha-D-ribose 1-phosphate + uracil. The catalysed reaction is xanthosine + phosphate = alpha-D-ribose 1-phosphate + xanthine. In terms of biological role, catalyzes the phosphorolysis of diverse nucleosides, yielding D-ribose 1-phosphate and the respective free bases. Can use uridine, adenosine, guanosine, cytidine, thymidine, inosine and xanthosine as substrates. Also catalyzes the reverse reactions. The chain is Pyrimidine/purine nucleoside phosphorylase from Pseudomonas syringae pv. syringae (strain B728a).